The chain runs to 265 residues: HTH-type transcriptional activator CfaD (265 aa).

One can recognise an HTH araC/xylS-type domain in the interval 164–261; the sequence is DKVRNVIEKD…GVTPKQFFTY (98 aa). DNA-binding regions (H-T-H motif) lie at residues 181–202 and 228–251; these read GIIA…ESEN and ISQI…NKHY.

In terms of assembly, homodimer.

Its function is as follows. Transcriptional activator of the CFA/I adhesin (cfaA and cfaB) genes of enterotoxigenic E.coli at 37 degrees Celsius. Also represses the silencing effect of H-NS (hns). In Escherichia coli, this protein is HTH-type transcriptional activator CfaD.